The primary structure comprises 286 residues: Formyltetrahydrofolate deformylase (286 aa).

In terms of domain architecture, ACT spans 8-88; it reads VLTLQCPEGI…MDWQLRERGQ (81 aa). Aspartate 230 is a catalytic residue.

It belongs to the PurU family.

The enzyme catalyses (6R)-10-formyltetrahydrofolate + H2O = (6S)-5,6,7,8-tetrahydrofolate + formate + H(+). Its pathway is purine metabolism; IMP biosynthesis via de novo pathway; formate from 10-formyl-5,6,7,8-tetrahydrofolate: step 1/1. In terms of biological role, catalyzes the hydrolysis of 10-formyltetrahydrofolate (formyl-FH4) to formate and tetrahydrofolate (FH4). The sequence is that of Formyltetrahydrofolate deformylase from Corynebacterium sp. (strain P-1).